The chain runs to 128 residues: Small ribosomal subunit protein uS11 (128 aa).

It belongs to the universal ribosomal protein uS11 family. As to quaternary structure, part of the 30S ribosomal subunit. Interacts with proteins S7 and S18. Binds to IF-3.

In terms of biological role, located on the platform of the 30S subunit, it bridges several disparate RNA helices of the 16S rRNA. Forms part of the Shine-Dalgarno cleft in the 70S ribosome. The polypeptide is Small ribosomal subunit protein uS11 (Synechococcus sp. (strain JA-2-3B'a(2-13)) (Cyanobacteria bacterium Yellowstone B-Prime)).